A 132-amino-acid polypeptide reads, in one-letter code: Putative RNase AF_2433 (132 aa).

Catalysis depends on residues R90 and H95. The RX(4)HXY motif motif lies at 90 to 97; sequence RNWLVHRY. Y97 carries the O-di-AMP-tyrosine modification.

It belongs to the HepT RNase toxin family. Homodimer, probably forms a complex with cognate antitoxin AF_2432. Post-translationally, modified by cognate antitoxin AF_2432; probably at least 2 successive AMPylation events occur on Tyr-97.

Its function is as follows. Probable toxic component of a putative type VII toxin-antitoxin (TA) system, probably an RNase. Probably neutralized by cognate antitoxin AF_2432. Neutralization may be due to AMPylation by AF_2432. The protein is Putative RNase AF_2433 of Archaeoglobus fulgidus (strain ATCC 49558 / DSM 4304 / JCM 9628 / NBRC 100126 / VC-16).